The chain runs to 544 residues: MAAKQVIFGDDARAKIVNGVNILANAVKVTLGPKGRNVVLERSFGSPTVTKDGVSVAKEIELSDKLENMGAQLVKEVASKTNDNAGDGTTTATVLAQAIVREGFKYVAAGFNPTDLKRGIDKAVAEIVNEIKAIAKPTTTSKEIAQVGSISANSDADIGQIIADAMDKVGKEGVITVEDGSGLQNELDVVEGMQFDRGYLSPYFINNPERQIALLENPFVLLYDKKISNIRDLLPTLEQVAKAGRPLLIIAEDVEGEALATLVVNNIRGILKAVAVKAPGFGDRRKAMLEDIAILTGGTVIAEEVGLSLEKVTLENLGQAKRVEIGKENTTIIDGAGSENNIKVRIDQIKKQIEDATSDYDREKLQERVAKLAGGVAVIKVGAATETEMKEKKARVEDALHATRAAVEEGIVPGGGVALLRARSSIKELKGDNPDQDAGIKIVLRAIEEPLRQIVANAGDEPSVVVNKVLEGTGNYGYNASNGTYGDLVELGVLDPAKVTRSALQNAASVASLILTTDALVAELPKEEAAPAMPDAGGMGGMGF.

ATP contacts are provided by residues 30-33 (TLGP), Lys-51, 87-91 (DGTTT), Gly-415, and Asp-495.

This sequence belongs to the chaperonin (HSP60) family. As to quaternary structure, forms a cylinder of 14 subunits composed of two heptameric rings stacked back-to-back. Interacts with the co-chaperonin GroES.

It localises to the cytoplasm. The catalysed reaction is ATP + H2O + a folded polypeptide = ADP + phosphate + an unfolded polypeptide.. Functionally, together with its co-chaperonin GroES, plays an essential role in assisting protein folding. The GroEL-GroES system forms a nano-cage that allows encapsulation of the non-native substrate proteins and provides a physical environment optimized to promote and accelerate protein folding. In Methylobacillus flagellatus (strain ATCC 51484 / DSM 6875 / VKM B-1610 / KT), this protein is Chaperonin GroEL.